We begin with the raw amino-acid sequence, 409 residues long: Probable glutaryl-CoA dehydrogenase, mitochondrial (409 aa).

Substrate is bound at residue 110-111 (RS). Residues 149 to 152 (FGLT), S158, and 184 to 186 (WIS) each bind FAD. S158 contributes to the substrate binding site. Substrate-binding positions include 261-265 (FGCLN) and R268. Residue E388 is the Proton acceptor of the active site. Positions 390 and 408 each coordinate FAD.

The protein belongs to the acyl-CoA dehydrogenase family. FAD is required as a cofactor.

The protein resides in the mitochondrion matrix. It carries out the reaction glutaryl-CoA + oxidized [electron-transfer flavoprotein] + 2 H(+) = (2E)-butenoyl-CoA + reduced [electron-transfer flavoprotein] + CO2. It functions in the pathway amino-acid metabolism; lysine degradation. Its pathway is amino-acid metabolism; tryptophan metabolism. The polypeptide is Probable glutaryl-CoA dehydrogenase, mitochondrial (Caenorhabditis elegans).